The sequence spans 94 residues: Small ribosomal subunit protein uS19 (94 aa).

It belongs to the universal ribosomal protein uS19 family.

Functionally, protein S19 forms a complex with S13 that binds strongly to the 16S ribosomal RNA. This chain is Small ribosomal subunit protein uS19, found in Acidobacterium capsulatum (strain ATCC 51196 / DSM 11244 / BCRC 80197 / JCM 7670 / NBRC 15755 / NCIMB 13165 / 161).